The chain runs to 221 residues: Max dimerization protein 1 (221 aa).

The short motif at 21–49 is the Nuclear localization signal element; the sequence is RREREAEHGYASMLPYNNKDRDALKRRNK. Disordered regions lie at residues 30 to 68 and 173 to 204; these read YASM…EKNR and TGDL…YSST. In terms of domain architecture, bHLH spans 56–108; the sequence is SSRSTHNEMEKNRRAHLRLCLEKLKGLVPLGPESSRHTTLSLLTKAKLHIKKL. Low complexity predominate over residues 175–184; the sequence is DLDWSSSSVS. Over residues 191 to 204 the composition is skewed to polar residues; the sequence is SMQSLGSDEGYSST.

Heterodimer with MAX; the interaction is required for DNA-binding. DNA binding requires dimerization with another bHLH protein; does not form homodimers, and does not bind to DNA in the absence of MAX in vitro. Interacts with RNF17. In terms of processing, ubiquitinated by BIRC2/c-IAP1, leading to its subsequent degradation by the proteasome.

It is found in the nucleus. Component of a transcriptional repressor complex together with MAX. In complex with MAX binds to the core DNA sequence 5'-CAC[GA]TG-3'. Antagonizes MYC transcriptional activity by competing with MYC for MAX binding. Binds to the TERT promoter and represses telomerase expression, possibly by interfering with MYC binding. This Homo sapiens (Human) protein is Max dimerization protein 1 (MXD1).